A 20-amino-acid chain; its full sequence is Trypsin inhibitor A chain (20 aa).

It belongs to the protease inhibitor I3 (leguminous Kunitz-type inhibitor) family. Heterodimer of an 'A' and a 'B' chain linked by a disulfide bond.

Inhibits trypsin and alpha-chymotrypsin. In Albizia julibrissin (Silk tree), this protein is Trypsin inhibitor A chain.